A 305-amino-acid polypeptide reads, in one-letter code: Translation initiation factor eIF2B subunit alpha (305 aa).

Ser2 bears the N-acetylserine mark. A Phosphothreonine modification is found at Thr291.

It belongs to the eIF-2B alpha/beta/delta subunits family. As to quaternary structure, component of the translation initiation factor 2B (eIF2B) complex which is a heterodecamer of two sets of five different subunits: alpha, beta, gamma, delta and epsilon. Subunits alpha, beta and delta comprise a regulatory subcomplex and subunits epsilon and gamma comprise a catalytic subcomplex. Within the complex, the hexameric regulatory complex resides at the center, with the two heterodimeric catalytic subcomplexes bound on opposite sides.

The protein localises to the cytoplasm. It is found in the cytosol. Functionally, acts as a component of the translation initiation factor 2B (eIF2B) complex, which catalyzes the exchange of GDP for GTP on the eukaryotic initiation factor 2 (eIF2) complex gamma subunit. Its guanine nucleotide exchange factor activity is repressed when bound to eIF2 complex phosphorylated on the alpha subunit, thereby limiting the amount of methionyl-initiator methionine tRNA available to the ribosome and consequently global translation is repressed. It activates the translation of GCN4 in response to low amino acid, carbon, or purine availability, by suppressing the inhibitory effects of multiple uORFs present in the leader of GCN4 mRNA. It may promote either repression or activation of GCN4 expression depending on amino acid availability. Modulation of GCN3 regulatory function in response to amino acid availability occurs post-translationally. The protein is Translation initiation factor eIF2B subunit alpha of Saccharomyces cerevisiae (strain ATCC 204508 / S288c) (Baker's yeast).